We begin with the raw amino-acid sequence, 611 residues long: Actin-binding LIM protein 2 (611 aa).

LIM zinc-binding domains are found at residues 22–81 (ILCN…LYGT), 81–141 (TRCF…VSVG), 151–210 (RSCG…KFGI), and 210–270 (IRCD…ARTE). 8 residues coordinate Zn(2+): C83, C86, H103, C106, C109, C112, C131, and C134. Zn(2+) is bound by residues C212, C215, H232, C235, C238, C241, H260, and C263. A compositionally biased stretch (basic and acidic residues) spans 269-278 (TEDRNKETRT). Disordered regions lie at residues 269–295 (TEDRNKETRTSSESIISVPASSTSGSP) and 336–527 (YISH…DQRN). Low complexity-rich tracts occupy residues 279 to 295 (SSESIISVPASSTSGSP) and 363 to 372 (SSPSSTGSVS). Phosphoserine is present on residues S282, S294, S364, and S367. The span at 393–404 (SGRSTPSLSVLS) shows a compositional bias: polar residues. S452 carries the post-translational modification Phosphoserine. T472 is subject to Phosphothreonine. The segment covering 473 to 488 (RTNSPDLDTQSLSHSS) has biased composition (polar residues). 2 positions are modified to phosphoserine: S476 and S578. Residues 543–611 (MREYKIYPYD…NDLKKKALLF (69 aa)) form the HP domain.

As to quaternary structure, interacts with F-actin and ABRA. As to expression, highly expressed in skeletal muscle.

It localises to the cytoplasm. Functionally, may act as scaffold protein. May stimulate ABRA activity and ABRA-dependent SRF transcriptional activity. In Homo sapiens (Human), this protein is Actin-binding LIM protein 2 (ABLIM2).